We begin with the raw amino-acid sequence, 130 residues long: Histone H2A.1 (130 aa).

The interval 1-21 (MSGGKGKVGSSEKASTSRSAK) is disordered. Ser2 is subject to N-acetylserine. N6-acetyllysine occurs at positions 5 and 7. Gln105 is subject to N5-methylglutamine. Residue Ser127 is modified to Phosphoserine. Positions 127–128 (SQ) match the [ST]-Q motif motif.

It belongs to the histone H2A family. In terms of assembly, the nucleosome is a histone octamer containing two molecules each of H2A, H2B, H3 and H4 assembled in one H3-H4 heterotetramer and two H2A-H2B heterodimers. The octamer wraps approximately 147 bp of DNA. Phosphorylated to form H2AS128ph (gamma-H2A) in response to DNA double-strand breaks (DSBs) generated by exogenous genotoxic agents and by stalled replication forks. Phosphorylation is dependent on the DNA damage checkpoint kinases MEC1/ATR and TEL1/ATM, spreads on either side of a detected DSB site and may mark the surrounding chromatin for recruitment of proteins required for DNA damage signaling and repair. Gamma-H2A is removed from the DNA prior to the strand invasion-primer extension step of the repair process and subsequently dephosphorylated. Dephosphorylation is necessary for efficient recovery from the DNA damage checkpoint. Post-translationally, acetylated by ESA1 to form H2AK4ac and H2AK7ac.

Its subcellular location is the nucleus. The protein resides in the chromosome. Its function is as follows. Core component of nucleosome which plays a central role in DNA double strand break (DSB) repair. Nucleosomes wrap and compact DNA into chromatin, limiting DNA accessibility to the cellular machineries which require DNA as a template. Histones thereby play a central role in transcription regulation, DNA repair, DNA replication and chromosomal stability. DNA accessibility is regulated via a complex set of post-translational modifications of histones, also called histone code, and nucleosome remodeling. The polypeptide is Histone H2A.1 (HTA1) (Meyerozyma guilliermondii (strain ATCC 6260 / CBS 566 / DSM 6381 / JCM 1539 / NBRC 10279 / NRRL Y-324) (Yeast)).